A 457-amino-acid polypeptide reads, in one-letter code: Cell division cycle 20.1, cofactor of APC complex (457 aa).

WD repeat units lie at residues valine 138–leucine 175, glutamate 180–threonine 219, glycine 223–glutamate 260, glycine 264–threonine 303, glutamate 312–serine 354, aspartate 356–glutamate 397, and glycine 400–lysine 439.

The protein belongs to the WD repeat CDC20/Fizzy family. The APC/C is composed of at least 11 subunits that stay tightly associated throughout the cell cycle. Interacts with APC10, FZR1, FZR2, FZR3. Binds to GIG1 and PYM. Part of the mitotic checkpoint complex (MCC); interacts with MAD2, BUB3.1, BUBR1 and BUB1. Binds to cyclins CYCA1-2, CYCB2-1 and CYCB2-2. Interacts with PANS1. In terms of tissue distribution, expressed in meristems and organ primordia. Present in flowers, leaves, stems, roots, pollen grains and developing seeds.

It is found in the nucleus. It participates in protein modification; protein ubiquitination. Component of the anaphase promoting complex/cyclosome (APC/C), a cell cycle-regulated E3 ubiquitin-protein ligase complex that controls progression through mitosis and the G1 phase of the cell cycle. This Arabidopsis thaliana (Mouse-ear cress) protein is Cell division cycle 20.1, cofactor of APC complex (CDC20-1).